The following is a 217-amino-acid chain: Octanoyltransferase (217 aa).

Positions 34–216 (SETRDELWLL…AASRASRHDR (183 aa)) constitute a BPL/LPL catalytic domain. Residues 73–80 (RGGQVTWH), 140–142 (ALG), and 153–155 (GLS) each bind substrate. C171 (acyl-thioester intermediate) is an active-site residue.

Belongs to the LipB family.

The protein localises to the cytoplasm. The catalysed reaction is octanoyl-[ACP] + L-lysyl-[protein] = N(6)-octanoyl-L-lysyl-[protein] + holo-[ACP] + H(+). Its pathway is protein modification; protein lipoylation via endogenous pathway; protein N(6)-(lipoyl)lysine from octanoyl-[acyl-carrier-protein]: step 1/2. Functionally, catalyzes the transfer of endogenously produced octanoic acid from octanoyl-acyl-carrier-protein onto the lipoyl domains of lipoate-dependent enzymes. Lipoyl-ACP can also act as a substrate although octanoyl-ACP is likely to be the physiological substrate. In Halorhodospira halophila (strain DSM 244 / SL1) (Ectothiorhodospira halophila (strain DSM 244 / SL1)), this protein is Octanoyltransferase.